Consider the following 380-residue polypeptide: Queuine tRNA-ribosyltransferase (380 aa).

Residue Asp-95 is the Proton acceptor of the active site. Residues 95-99 (DSGGF), Asp-149, Gln-192, and Gly-219 contribute to the substrate site. Residues 250–256 (GVGSPDA) are RNA binding. The active-site Nucleophile is Asp-269. The tract at residues 274 to 278 (TRIAR) is RNA binding; important for wobble base 34 recognition. Residues Cys-307, Cys-309, Cys-312, and His-338 each contribute to the Zn(2+) site.

It belongs to the queuine tRNA-ribosyltransferase family. Homodimer. Within each dimer, one monomer is responsible for RNA recognition and catalysis, while the other monomer binds to the replacement base PreQ1. Zn(2+) is required as a cofactor.

The catalysed reaction is 7-aminomethyl-7-carbaguanine + guanosine(34) in tRNA = 7-aminomethyl-7-carbaguanosine(34) in tRNA + guanine. It functions in the pathway tRNA modification; tRNA-queuosine biosynthesis. In terms of biological role, catalyzes the base-exchange of a guanine (G) residue with the queuine precursor 7-aminomethyl-7-deazaguanine (PreQ1) at position 34 (anticodon wobble position) in tRNAs with GU(N) anticodons (tRNA-Asp, -Asn, -His and -Tyr). Catalysis occurs through a double-displacement mechanism. The nucleophile active site attacks the C1' of nucleotide 34 to detach the guanine base from the RNA, forming a covalent enzyme-RNA intermediate. The proton acceptor active site deprotonates the incoming PreQ1, allowing a nucleophilic attack on the C1' of the ribose to form the product. After dissociation, two additional enzymatic reactions on the tRNA convert PreQ1 to queuine (Q), resulting in the hypermodified nucleoside queuosine (7-(((4,5-cis-dihydroxy-2-cyclopenten-1-yl)amino)methyl)-7-deazaguanosine). This Pediococcus pentosaceus (strain ATCC 25745 / CCUG 21536 / LMG 10740 / 183-1w) protein is Queuine tRNA-ribosyltransferase.